We begin with the raw amino-acid sequence, 742 residues long: Phosphoribosylformylglycinamidine synthase subunit PurL (742 aa).

Residue His-53 is part of the active site. ATP contacts are provided by Tyr-56 and Lys-95. Residue Glu-97 participates in Mg(2+) binding. Substrate is bound by residues 98-101 and Arg-120; that span reads SHNH. Residue His-99 is the Proton acceptor of the active site. Asp-121 is a Mg(2+) binding site. Gln-244 contacts substrate. Asp-274 serves as a coordination point for Mg(2+). 318–320 lines the substrate pocket; it reads ESQ. Asp-501 and Gly-538 together coordinate ATP. Asn-539 serves as a coordination point for Mg(2+). Residue Ser-541 coordinates substrate.

This sequence belongs to the FGAMS family. As to quaternary structure, monomer. Part of the FGAM synthase complex composed of 1 PurL, 1 PurQ and 2 PurS subunits.

It is found in the cytoplasm. The catalysed reaction is N(2)-formyl-N(1)-(5-phospho-beta-D-ribosyl)glycinamide + L-glutamine + ATP + H2O = 2-formamido-N(1)-(5-O-phospho-beta-D-ribosyl)acetamidine + L-glutamate + ADP + phosphate + H(+). The protein operates within purine metabolism; IMP biosynthesis via de novo pathway; 5-amino-1-(5-phospho-D-ribosyl)imidazole from N(2)-formyl-N(1)-(5-phospho-D-ribosyl)glycinamide: step 1/2. Its function is as follows. Part of the phosphoribosylformylglycinamidine synthase complex involved in the purines biosynthetic pathway. Catalyzes the ATP-dependent conversion of formylglycinamide ribonucleotide (FGAR) and glutamine to yield formylglycinamidine ribonucleotide (FGAM) and glutamate. The FGAM synthase complex is composed of three subunits. PurQ produces an ammonia molecule by converting glutamine to glutamate. PurL transfers the ammonia molecule to FGAR to form FGAM in an ATP-dependent manner. PurS interacts with PurQ and PurL and is thought to assist in the transfer of the ammonia molecule from PurQ to PurL. The protein is Phosphoribosylformylglycinamidine synthase subunit PurL of Limosilactobacillus reuteri (strain DSM 20016) (Lactobacillus reuteri).